The following is a 236-amino-acid chain: Ribose-5-phosphate isomerase A (236 aa).

Substrate is bound by residues 33-36 (TGST), 90-93 (DGAD), and 103-106 (KGGG). Glutamate 112 (proton acceptor) is an active-site residue. A substrate-binding site is contributed by lysine 130.

This sequence belongs to the ribose 5-phosphate isomerase family. As to quaternary structure, homodimer.

The catalysed reaction is aldehydo-D-ribose 5-phosphate = D-ribulose 5-phosphate. It participates in carbohydrate degradation; pentose phosphate pathway; D-ribose 5-phosphate from D-ribulose 5-phosphate (non-oxidative stage): step 1/1. Its function is as follows. Catalyzes the reversible conversion of ribose-5-phosphate to ribulose 5-phosphate. The sequence is that of Ribose-5-phosphate isomerase A from Trichormus variabilis (strain ATCC 29413 / PCC 7937) (Anabaena variabilis).